The sequence spans 212 residues: Bilin biosynthesis protein PecF (212 aa).

The protein belongs to the CpcE/RpcE/PecE family.

Functionally, an enzyme involved in the biosynthesis of bilin. This is Bilin biosynthesis protein PecF (pecF) from Mastigocladus laminosus (Fischerella sp.).